A 428-amino-acid chain; its full sequence is L-lysine N6-monooxygenase MbtG (428 aa).

The first 20 residues, 1-20 (MSTLAILGAGAKAVAVAAKA), serve as a signal peptide directing secretion.

The protein belongs to the lysine N(6)-hydroxylase/L-ornithine N(5)-oxygenase family. FAD serves as cofactor.

The enzyme catalyses L-lysine + NADPH + O2 = N(6)-hydroxy-L-lysine + NADP(+) + H2O. Its pathway is siderophore biosynthesis; mycobactin biosynthesis. Flavoprotein monooxygenase required for N-hydroxylation of the two acylated lysine residues during mycobactin assembly, thus producing the hydroxamate groups necessary for iron sequestration. Is also able, but less efficiently, to hydroxylate L-lysine (non acylated) in vitro. The protein is L-lysine N6-monooxygenase MbtG (mbtG) of Mycolicibacterium paratuberculosis (strain ATCC BAA-968 / K-10) (Mycobacterium paratuberculosis).